We begin with the raw amino-acid sequence, 213 residues long: Tellurium resistance protein TerX (213 aa).

Belongs to the CAPAB/TerDEXZ family.

Functionally, not known; seems to contribute to the tellurium resistance (Ter) mechanism. Also involved in phage inhibition (Phi) and colicin resistance (PacB). The protein is Tellurium resistance protein TerX (terX) of Serratia marcescens.